Reading from the N-terminus, the 329-residue chain is Ubiquitin carboxyl-terminal hydrolase isozyme L5 (329 aa).

Positions 7-225 (EWCLMESDPG…IRFNLMAIVS (219 aa)) constitute a UCH catalytic domain. Residue Lys-47 is modified to N6-succinyllysine. Cys-88 acts as the Nucleophile in catalysis. At Lys-158 the chain carries N6-acetyllysine. The Proton donor role is filled by His-164. Lys-289 carries the N6-succinyllysine modification. In terms of domain architecture, ULD spans 291-319 (NYLPFIMELLKTLAEHQQLIPLVEKAKEK). The interaction with ADRM1 stretch occupies residues 313–329 (VEKAKEKQNAKKAQETK).

The protein belongs to the peptidase C12 family. In terms of assembly, component of the 19S (PA700) regulatory complex of the 26S proteasome. Interacts with ADRM1 and NFRKB. Component of the INO80 complex; specifically part of a complex module associated with N-terminus of INO80.

It localises to the cytoplasm. Its subcellular location is the nucleus. The catalysed reaction is Thiol-dependent hydrolysis of ester, thioester, amide, peptide and isopeptide bonds formed by the C-terminal Gly of ubiquitin (a 76-residue protein attached to proteins as an intracellular targeting signal).. Its activity is regulated as follows. Activated by ADRM1. Inhibited by interaction with NFRKB. Its function is as follows. Protease that specifically cleaves 'Lys-48'-linked polyubiquitin chains. Deubiquitinating enzyme associated with the 19S regulatory subunit of the 26S proteasome. Putative regulatory component of the INO80 complex; however is inactive in the INO80 complex and is activated by a transient interaction of the INO80 complex with the proteasome via ADRM1. This is Ubiquitin carboxyl-terminal hydrolase isozyme L5 (Uchl5) from Mus musculus (Mouse).